Here is a 297-residue protein sequence, read N- to C-terminus: N-acetylmuramic acid 6-phosphate etherase (297 aa).

The SIS domain occupies alanine 56–lysine 219. The Proton donor role is filled by glutamate 84. Glutamate 115 is an active-site residue.

It belongs to the GCKR-like family. MurNAc-6-P etherase subfamily. Homodimer.

The enzyme catalyses N-acetyl-D-muramate 6-phosphate + H2O = N-acetyl-D-glucosamine 6-phosphate + (R)-lactate. The protein operates within amino-sugar metabolism; N-acetylmuramate degradation. Specifically catalyzes the cleavage of the D-lactyl ether substituent of MurNAc 6-phosphate, producing GlcNAc 6-phosphate and D-lactate. This is N-acetylmuramic acid 6-phosphate etherase from Lactococcus lactis subsp. cremoris (strain SK11).